A 501-amino-acid polypeptide reads, in one-letter code: Group 3 secretory phospholipase A2 (501 aa).

A signal peptide spans 1 to 19 (MGVLVVLLGVLSFLGRTLG). The interval 119-139 (RGPAESPAGTREKRAAGQNGV) is disordered. Residues 150–291 (GWTVPGTLWC…SWSSPATSLT (142 aa)) are phospholipase A2-like. Positions 158, 160, and 162 each coordinate Ca(2+). Disulfide bonds link Cys-159-Cys-181, Cys-180-Cys-220, Cys-187-Cys-213, and Cys-211-Cys-244. N-linked (GlcNAc...) asparagine glycosylation occurs at Asn-167. His-184 is a catalytic residue. Asp-185 serves as a coordination point for Ca(2+). Asp-214 is a catalytic residue. A glycan (N-linked (GlcNAc...) asparagine) is linked at Asn-280. Residues 284–298 (SSPATSLTPSPQNPA) show a composition bias toward polar residues. The disordered stretch occupies residues 284-339 (SSPATSLTPSPQNPALSRPQPMQHPQQWPSEWKESKSPSKTNATALQAPVASPGSD). N-linked (GlcNAc...) asparagine glycans are attached at residues Asn-325 and Asn-403.

It belongs to the phospholipase A2 family. Ca(2+) serves as cofactor. N-glycosylation does not affect the catalytic activity, but is required for proper secretion. A nonglycosylated form was observed in several cell types. Post-translationally, in several cell types, the N- and C-termini are cleaved off.

The protein localises to the secreted. Its subcellular location is the cell membrane. The protein resides in the cytoplasm. It is found in the cytoskeleton. It localises to the microtubule organizing center. The protein localises to the centrosome. Its subcellular location is the centriole. The protein resides in the recycling endosome. The catalysed reaction is a 1,2-diacyl-sn-glycero-3-phosphocholine + H2O = a 1-acyl-sn-glycero-3-phosphocholine + a fatty acid + H(+). It carries out the reaction 1-hexadecanoyl-2-(9Z,12Z-octadecadienoyl)-sn-glycero-3-phosphocholine + H2O = (9Z,12Z)-octadecadienoate + 1-hexadecanoyl-sn-glycero-3-phosphocholine + H(+). The enzyme catalyses 1-hexadecanoyl-2-(5Z,8Z,11Z,14Z-eicosatetraenoyl)-sn-glycero-3-phosphocholine + H2O = 1-hexadecanoyl-sn-glycero-3-phosphocholine + (5Z,8Z,11Z,14Z)-eicosatetraenoate + H(+). It catalyses the reaction 1-hexadecanoyl-2-(9Z,12Z-octadecadienoyl)-sn-glycero-3-phosphoethanolamine + H2O = 1-hexadecanoyl-sn-glycero-3-phosphoethanolamine + (9Z,12Z)-octadecadienoate + H(+). The catalysed reaction is 1-hexadecanoyl-2-(5Z,8Z,11Z,14Z-eicosatetraenoyl)-sn-glycero-3-phosphoethanolamine + H2O = 1-hexadecanoyl-sn-glycero-3-phosphoethanolamine + (5Z,8Z,11Z,14Z)-eicosatetraenoate + H(+). In terms of biological role, secretory calcium-dependent phospholipase A2 that primarily targets extracellular phospholipids. Hydrolyzes the ester bond of the fatty acyl group attached at sn-2 position of phospholipids without apparent head group selectivity. Contributes to phospholipid remodeling of low-density lipoprotein (LDL) and high-density lipoprotein (HDL) particles. Hydrolyzes LDL phospholipids releasing unsaturated fatty acids that regulate macrophage differentiation toward foam cells. May act in an autocrine and paracrine manner. Secreted by immature mast cells, acts on nearby fibroblasts upstream to PTDGS to synthesize prostaglandin D2 (PGD2), which in turn promotes mast cell maturation and degranulation via PTGDR. Secreted by epididymal epithelium, acts on immature sperm cells within the duct, modulating the degree of unsaturation of the fatty acyl components of phosphatidylcholines required for acrosome assembly and sperm cell motility. Facilitates the replacement of fatty acyl chains in phosphatidylcholines in sperm membranes from omega-6 and omega-9 to omega-3 polyunsaturated fatty acids (PUFAs). Coupled to lipoxygenase pathway, may process omega-6 PUFAs to generate oxygenated lipid mediators in the male reproductive tract. At pericentrosomal preciliary compartment, negatively regulates ciliogenesis likely by regulating endocytotic recycling of ciliary membrane protein. Coupled to cyclooxygenase pathway provides arachidonate to generate prostaglandin E2 (PGE2), a potent immunomodulatory lipid in inflammation and tumorigenesis. At colonic epithelial barrier, preferentially hydrolyzes phospholipids having arachidonate and docosahexaenoate at sn-2 position, contributing to the generation of oxygenated metabolites involved in colonic stem cell homeostasis. Releases C16:0 and C18:0 lysophosphatidylcholine subclasses from neuron plasma membranes and promotes neurite outgrowth and neuron survival. This is Group 3 secretory phospholipase A2 (PLA2G3) from Bos taurus (Bovine).